The primary structure comprises 241 residues: 1-(5-phosphoribosyl)-5-[(5-phosphoribosylamino)methylideneamino] imidazole-4-carboxamide isomerase (241 aa).

The active-site Proton acceptor is Asp12. Asp133 serves as the catalytic Proton donor.

It belongs to the HisA/HisF family.

Its subcellular location is the cytoplasm. It catalyses the reaction 1-(5-phospho-beta-D-ribosyl)-5-[(5-phospho-beta-D-ribosylamino)methylideneamino]imidazole-4-carboxamide = 5-[(5-phospho-1-deoxy-D-ribulos-1-ylimino)methylamino]-1-(5-phospho-beta-D-ribosyl)imidazole-4-carboxamide. It participates in amino-acid biosynthesis; L-histidine biosynthesis; L-histidine from 5-phospho-alpha-D-ribose 1-diphosphate: step 4/9. The protein is 1-(5-phosphoribosyl)-5-[(5-phosphoribosylamino)methylideneamino] imidazole-4-carboxamide isomerase of Persephonella marina (strain DSM 14350 / EX-H1).